We begin with the raw amino-acid sequence, 269 residues long: Shikimate dehydrogenase (NADP(+)) (269 aa).

Shikimate-binding positions include 17–19 and Thr64; that span reads SKS. Lys68 functions as the Proton acceptor in the catalytic mechanism. Asp80 serves as a coordination point for NADP(+). Residues Asn89 and Asp105 each contribute to the shikimate site. Residues 130 to 134, 154 to 159, and Met213 contribute to the NADP(+) site; these read GAGGA and NRTRAK. Tyr215 lines the shikimate pocket. Residue Gly237 coordinates NADP(+).

The protein belongs to the shikimate dehydrogenase family. In terms of assembly, homodimer.

The catalysed reaction is shikimate + NADP(+) = 3-dehydroshikimate + NADPH + H(+). Its pathway is metabolic intermediate biosynthesis; chorismate biosynthesis; chorismate from D-erythrose 4-phosphate and phosphoenolpyruvate: step 4/7. Its function is as follows. Involved in the biosynthesis of the chorismate, which leads to the biosynthesis of aromatic amino acids. Catalyzes the reversible NADPH linked reduction of 3-dehydroshikimate (DHSA) to yield shikimate (SA). The polypeptide is Shikimate dehydrogenase (NADP(+)) (Neisseria gonorrhoeae (strain ATCC 700825 / FA 1090)).